Consider the following 123-residue polypeptide: Small ribosomal subunit protein uS12cz/uS12cy (123 aa).

Belongs to the universal ribosomal protein uS12 family. Part of the 30S ribosomal subunit.

It is found in the plastid. It localises to the chloroplast. In terms of biological role, with S4 and S5 plays an important role in translational accuracy. Located at the interface of the 30S and 50S subunits. This is Small ribosomal subunit protein uS12cz/uS12cy (rps12-A) from Psilotum nudum (Whisk fern).